We begin with the raw amino-acid sequence, 174 residues long: Dual-action ribosomal maturation protein DarP (174 aa).

Belongs to the DarP family.

Its subcellular location is the cytoplasm. Member of a network of 50S ribosomal subunit biogenesis factors which assembles along the 30S-50S interface, preventing incorrect 23S rRNA structures from forming. Promotes peptidyl transferase center (PTC) maturation. This is Dual-action ribosomal maturation protein DarP from Pseudomonas paraeruginosa (strain DSM 24068 / PA7) (Pseudomonas aeruginosa (strain PA7)).